We begin with the raw amino-acid sequence, 468 residues long: 3-isopropylmalate dehydratase large subunit (468 aa).

[4Fe-4S] cluster-binding residues include Cys-347, Cys-407, and Cys-410. The segment covering 424 to 441 (SASSSNRNFKGRQGSPSG) has biased composition (polar residues). Residues 424–443 (SASSSNRNFKGRQGSPSGRT) form a disordered region.

The protein belongs to the aconitase/IPM isomerase family. LeuC type 1 subfamily. Heterodimer of LeuC and LeuD. The cofactor is [4Fe-4S] cluster.

It catalyses the reaction (2R,3S)-3-isopropylmalate = (2S)-2-isopropylmalate. Its pathway is amino-acid biosynthesis; L-leucine biosynthesis; L-leucine from 3-methyl-2-oxobutanoate: step 2/4. Its function is as follows. Catalyzes the isomerization between 2-isopropylmalate and 3-isopropylmalate, via the formation of 2-isopropylmaleate. In Prochlorococcus marinus (strain MIT 9215), this protein is 3-isopropylmalate dehydratase large subunit.